The chain runs to 561 residues: Cytochrome P450 monooxygenase iboC (561 aa).

The helical transmembrane segment at arginine 8–alanine 28 threads the bilayer. Cysteine 484 provides a ligand contact to heme.

The protein belongs to the cytochrome P450 family. Requires heme as cofactor.

Its subcellular location is the membrane. The protein operates within secondary metabolite biosynthesis. In terms of biological role, cytochrome P450 monooxygenase; part of the gene cluster that mediates the biosynthesis of the psychoactive metabolites ibotenic acid and muscimol. The first committed step is glutamate hydroxylation by the 2-oxoglutarate-dependent dioxygenase iboH, and the last step is decarboxylation of ibotenic acid to muscimol by the decarboxylase iboD. The order of the intermediate reactions is somewhat ambiguous. IboA likely activates the carboxylic acid at position 5 to introduce an amide bond, and the flavin monooxygenase iboF generates the N-O bond. There are several options for the latter step. One option is that iboF directly hydroxylates the amide nitrogen formed by iboA to produce a hydroxamic acid species. Another option is that iboF hydroxylates an external N-containing compound, whose resulting N-O bond is subsequently introduced into the hydroxyglutamate scaffold. The paralogous PLP-dependent cystathionine gamma-synthase-like enzymes iboG1 and iboG2 are likely involved in substitution of the OH group at position 3 by the O-N moiety. The first cyclic intermediate is most probably tricholomic acid which is likely desaturated to ibotenic acid by the cytochrome P450 monooxygenase iboC. This is Cytochrome P450 monooxygenase iboC from Amanita muscaria (strain Koide BX008).